The following is a 98-amino-acid chain: NADH-ubiquinone oxidoreductase chain 4L (98 aa).

The next 3 helical transmembrane spans lie at 2 to 22 (TLTT…TLIF), 29 to 49 (TLLC…ITAL), and 61 to 81 (ITTL…LTMV).

It belongs to the complex I subunit 4L family. As to quaternary structure, core subunit of respiratory chain NADH dehydrogenase (Complex I) which is composed of 45 different subunits.

The protein localises to the mitochondrion inner membrane. The enzyme catalyses a ubiquinone + NADH + 5 H(+)(in) = a ubiquinol + NAD(+) + 4 H(+)(out). Functionally, core subunit of the mitochondrial membrane respiratory chain NADH dehydrogenase (Complex I) which catalyzes electron transfer from NADH through the respiratory chain, using ubiquinone as an electron acceptor. Part of the enzyme membrane arm which is embedded in the lipid bilayer and involved in proton translocation. This is NADH-ubiquinone oxidoreductase chain 4L (MT-ND4L) from Oxymycterus rufus (Red hocicudo).